The primary structure comprises 350 residues: MSTLLIDLKGKELEQEEVELLSHPLVAGLILFTRNFEDREQIQELIRSVRQRVKKPLLITVDQEGGRVQRFRDGFTMLPSMQAFQETLSATEQVSFAKEAGWQMAAEMIALDIDLSFAPVLDLGHECRAIGDRSFSSDVKSAVNLAINFIDGMHQAGMASTGKHFPGHGHVLADSHLETPYDDRTKDEIFGCDLQPFQQLIAQNKLDAIMPAHVIYSQCDSQPASGSEYWLKEILRKKLNFQGTIFSDDLGMKGAGVMGNFVERSKKALNAGCDLLLLCNEREGVIQVVDNLKLAKNQPHFMARQARLQNLFKRRVIDWNDLVSDLRWKLNYRNLADIQIRWLDIQAAKK.

Residues Asp-62, Arg-70, Arg-133, and 163–164 (KH) each bind substrate. His-176 acts as the Proton donor/acceptor in catalysis. Asp-248 serves as the catalytic Nucleophile.

Belongs to the glycosyl hydrolase 3 family. NagZ subfamily.

It is found in the cytoplasm. It carries out the reaction Hydrolysis of terminal non-reducing N-acetyl-D-hexosamine residues in N-acetyl-beta-D-hexosaminides.. Its pathway is cell wall biogenesis; peptidoglycan recycling. Functionally, plays a role in peptidoglycan recycling by cleaving the terminal beta-1,4-linked N-acetylglucosamine (GlcNAc) from peptide-linked peptidoglycan fragments, giving rise to free GlcNAc, anhydro-N-acetylmuramic acid and anhydro-N-acetylmuramic acid-linked peptides. This chain is Beta-hexosaminidase, found in Haemophilus influenzae (strain PittEE).